A 223-amino-acid polypeptide reads, in one-letter code: Bone marrow proteoglycan (223 aa).

Residues 1–16 (MKFPLLLALLVGGASA) form the signal peptide. Positions 17–106 (LHLSSETSDS…TSLMGDSGCK (90 aa)) are cleaved as a propeptide — acidic. The disordered stretch occupies residues 20–81 (SSETSDSKSP…PGDEGAVSGQ (62 aa)). The O-linked (GalNAc...) threonine; partial glycan is linked to Thr-23. Residue Ser-24 is glycosylated (O-linked (GalNAc...) serine). A glycan (O-linked (Xyl...) (chondroitin sulfate) serine) is linked at Ser-66. In terms of domain architecture, C-type lectin spans 124–223 (SVCRRCYRGT…VKRRPFICSY (100 aa)). Cystine bridges form between Cys-126/Cys-221 and Cys-198/Cys-213.

In terms of processing, nitrated.

The protein localises to the secreted. Its function is as follows. Cytotoxin and helminthotoxin. MBP also induces non-cytolytic histamine release from basophils. It is involved in antiparasitic defense mechanisms and immune hypersensitivity reactions. In Mus musculus (Mouse), this protein is Bone marrow proteoglycan (Prg2).